Here is a 98-residue protein sequence, read N- to C-terminus: Carboxysome shell protein CsoS1C (98 aa).

The 86-residue stretch at 8 to 93 (ALGMIETRGL…VHSEVENILP (86 aa)) folds into the BMC domain.

This sequence belongs to the bacterial microcompartments protein family. CsoS1 subfamily. Homohexamer with a small central pore. Interacts with the N-terminus (residues 1-136) of RuBisCO (CbbL).

It localises to the carboxysome. Functionally, one of shell proteins of the carboxysome, a polyhedral inclusion where RuBisCO (ribulose bisphosphate carboxylase, ccbL-ccbS) is sequestered. Assembles into hexamers which make sheets that form the facets of the polyhedral carboxysome. The shell probably limits the diffusion of CO(2) into and out of the carboxysome. There are estimated to be 2970 CsoS1A/CsoS1C proteins per carboxysome (the proteins differ by only 1 residue). In terms of biological role, unlike beta-carboxysomes, alpha-carboxysomes (Cb) can form without cargo protein. CsoS2 is essential for Cb formation and is also capable of targeting foreign proteins to the Cb. The Cb shell assembles with the aid of CsoS2; CsoS1A, CsoS1B and CsoS1C form the majority of the shell while CsoS4A and CsoS4B form vertices. CsoS1D forms pseudohexamers that probably control metabolite flux into and out of the shell. In Halothiobacillus neapolitanus (strain ATCC 23641 / c2) (Thiobacillus neapolitanus), this protein is Carboxysome shell protein CsoS1C.